A 137-amino-acid polypeptide reads, in one-letter code: Transcription antitermination protein NusB (137 aa).

The protein belongs to the NusB family.

Functionally, involved in transcription antitermination. Required for transcription of ribosomal RNA (rRNA) genes. Binds specifically to the boxA antiterminator sequence of the ribosomal RNA (rrn) operons. The chain is Transcription antitermination protein NusB from Haemophilus ducreyi (strain 35000HP / ATCC 700724).